The primary structure comprises 112 residues: Integration host factor subunit alpha (112 aa).

The protein belongs to the bacterial histone-like protein family. In terms of assembly, heterodimer of an alpha and a beta chain.

In terms of biological role, this protein is one of the two subunits of integration host factor, a specific DNA-binding protein that functions in genetic recombination as well as in transcriptional and translational control. This is Integration host factor subunit alpha from Rhizobium leguminosarum bv. trifolii (strain WSM2304).